Consider the following 443-residue polypeptide: Glutamyl-tRNA reductase (443 aa).

Substrate is bound by residues 49-52, Ser109, 114-116, and Gln120; these read TCNR and ETQ. Cys50 serves as the catalytic Nucleophile. Residue 189–194 participates in NADP(+) binding; that stretch reads GAGKMS.

Belongs to the glutamyl-tRNA reductase family. As to quaternary structure, homodimer.

It catalyses the reaction (S)-4-amino-5-oxopentanoate + tRNA(Glu) + NADP(+) = L-glutamyl-tRNA(Glu) + NADPH + H(+). It functions in the pathway porphyrin-containing compound metabolism; protoporphyrin-IX biosynthesis; 5-aminolevulinate from L-glutamyl-tRNA(Glu): step 1/2. Its function is as follows. Catalyzes the NADPH-dependent reduction of glutamyl-tRNA(Glu) to glutamate 1-semialdehyde (GSA). In Heliobacterium mobile (Heliobacillus mobilis), this protein is Glutamyl-tRNA reductase.